Consider the following 485-residue polypeptide: Cys-Gly metallodipeptidase DUG1 (485 aa).

A Zn(2+)-binding site is contributed by histidine 109. Residue aspartate 111 is part of the active site. A Zn(2+)-binding site is contributed by aspartate 144. Glutamate 178 acts as the Proton acceptor in catalysis. Positions 179, 207, and 457 each coordinate Zn(2+).

It belongs to the peptidase M20A family. In terms of assembly, homodimer. Component of the GSH degradosomal complex. Zn(2+) is required as a cofactor. Requires Mn(2+) as cofactor.

It is found in the cytoplasm. Its function is as follows. Catalytic component of the GSH degradosomal complex involved in the degradation of glutathione (GSH) and other peptides containing a gamma-glu-X bond. Also functions as a dipeptidase with high specificity for Cys-Gly and no activity toward tri- or tetrapeptides. The chain is Cys-Gly metallodipeptidase DUG1 (DUG1) from Candida albicans (strain SC5314 / ATCC MYA-2876) (Yeast).